A 513-amino-acid polypeptide reads, in one-letter code: Probable G-protein coupled receptor 176 (513 aa).

A disordered region spans residues 1–25 (MGHNGSWVSPNTSHPRNTSGAQAGA). Residues 1 to 41 (MGHNGSWVSPNTSHPRNTSGAQAGANSSAFGELSEAQLYRQ) lie on the Extracellular side of the membrane. Asn4, Asn11, Asn17, and Asn26 each carry an N-linked (GlcNAc...) asparagine glycan. Residues 42–64 (FTTTVQVVIFIGSLLGNFTVLWS) form a helical membrane-spanning segment. Residues 65-77 (TCRTTVFKSVTNR) are Cytoplasmic-facing. Residues 78–98 (FIKNLACSGICASVVCVPFDI) traverse the membrane as a helical segment. The Extracellular portion of the chain corresponds to 99-108 (ILSTSPHCCW). A helical membrane pass occupies residues 109 to 129 (WIYTMLFCKVLKFLHKVFCSV). At 130–157 (TVLSFPAIALDRYYSVLYPLERKISDAK) the chain is on the cytoplasmic side. Residues 158–177 (SRELVMYIWAHAVVASVPVF) traverse the membrane as a helical segment. The Extracellular portion of the chain corresponds to 178-204 (AVTNVADIYATSTCTEVWSNSLGHLVY). Residues 205–225 (VLIYNVTTVIVPVAVVFLFLI) traverse the membrane as a helical segment. Topologically, residues 226–264 (LIRRALSASQKKKVIIAALRTPQNTISIPYASQREAELH) are cytoplasmic. Residues 265–285 (ATLLSMVTVFILCSVPYATLV) traverse the membrane as a helical segment. The Extracellular portion of the chain corresponds to 286 to 301 (VYQTVLNVPNTSVFLL). The chain crosses the membrane as a helical span at residues 302–322 (LTAIWLPKVSLLANPVLFLTV). Residues 323-513 (NRSVRKCLVG…KVSIFPKVDS (191 aa)) are Cytoplasmic-facing. Residues 404-432 (VLTSSPEGEESQLAPSVPPPGTVDSVSRV) are disordered.

It belongs to the G-protein coupled receptor 1 family. Expressed in brain, lung, heart, stomach, intestine, cultured aortic smooth muscle cells and cardiac myocytes.

The protein localises to the cell membrane. Its function is as follows. Orphan receptor involved in normal circadian rhythm behavior. Acts through the G-protein subclass G(z)-alpha and has an agonist-independent basal activity to repress cAMP production. This Rattus norvegicus (Rat) protein is Probable G-protein coupled receptor 176 (Gpr176).